The sequence spans 365 residues: MSDLDEESQIETQIDAPIEDIIRGSELTTTTADKETLKSANELLDSLEHSHRVDLSLHLYSAYLLKRLLYKANEKKHFYEVNQFVKTQIKDNWTSWPNPNTIIDPSVDKLYEDIPEGIANVSVQPGEISNRALMHASDMMRVELDAQWQKFLSKSALDHDVTLDVDELNIPNEISRNILVKLDSLFEGLHDKIAKENEFDVRQDKHSNNIRANQIDDEPMQANRRIKYTYHDLVSRGCEMNEDMTDIYMKSLELYNDIPEKYKKRKFRLPKQILKKYHQPKKTSSYLKELLSKTREDFIPVEKLLKDKRLTSKDKSKLQRLNREETEDALNKRTFFQVKGYLEDENEISDYELDDCLIELPNGNI.

Belongs to the RRN9 family. As to quaternary structure, component of the UAF (upstream activation factor) complex which consists of UAF30, RRN5, RRN9, RRN10, and histones H3 and H4. Interacts with SPT15 and RRN7.

It is found in the nucleus. The protein localises to the nucleolus. Functionally, component of the UAF (upstream activation factor) complex which interacts with the upstream element of the RNA polymerase I promoter and forms a stable preinitiation complex. Together with SPT15/TBP UAF seems to stimulate basal transcription to a fully activated level. The protein is RNA polymerase I-specific transcription initiation factor RRN9 (RRN9) of Saccharomyces cerevisiae (strain ATCC 204508 / S288c) (Baker's yeast).